The following is a 417-amino-acid chain: D-galactonate dehydratase family member Dd703_0947 (417 aa).

Histidine 127 contacts substrate. The Proton donor/acceptor role is filled by tyrosine 158. A Mg(2+)-binding site is contributed by aspartate 223. The Proton donor/acceptor role is filled by histidine 225. 2 residues coordinate Mg(2+): glutamate 249 and glutamate 275. Positions 275, 296, 325, 329, and 352 each coordinate substrate.

Belongs to the mandelate racemase/muconate lactonizing enzyme family. GalD subfamily. Mg(2+) is required as a cofactor.

It carries out the reaction D-mannonate = 2-dehydro-3-deoxy-D-gluconate + H2O. It catalyses the reaction D-gluconate = 2-dehydro-3-deoxy-D-gluconate + H2O. Its function is as follows. Has low dehydratase activity with D-mannonate and D-gluconate, suggesting that these are not physiological substrates and that it has no significant role in the in vivo degradation of these compounds. Has no detectable activity with a panel of 70 other acid sugars (in vitro). This chain is D-galactonate dehydratase family member Dd703_0947, found in Musicola paradisiaca (strain Ech703) (Dickeya paradisiaca).